The primary structure comprises 607 residues: DNA mismatch repair protein MutL (607 aa).

It belongs to the DNA mismatch repair MutL/HexB family.

Functionally, this protein is involved in the repair of mismatches in DNA. It is required for dam-dependent methyl-directed DNA mismatch repair. May act as a 'molecular matchmaker', a protein that promotes the formation of a stable complex between two or more DNA-binding proteins in an ATP-dependent manner without itself being part of a final effector complex. The chain is DNA mismatch repair protein MutL from Gemmatimonas aurantiaca (strain DSM 14586 / JCM 11422 / NBRC 100505 / T-27).